The primary structure comprises 410 residues: Zinc finger protein 322 (410 aa).

8 consecutive C2H2-type zinc fingers follow at residues 81 to 103 (YRCD…QRIH), 109 to 131 (YKCS…QRTH), 137 to 159 (YTCD…QRSH), 165 to 187 (YLCN…RRTH), 193 to 215 (FKCL…QRTH), 221 to 243 (YKCN…KRVH), 249 to 271 (YKCG…QRVH), and 277 to 299 (YKCL…QATH). The C2H2-type 9; degenerate zinc-finger motif lies at 303–325 (FKCLEYEKSFNCSSDFIVHQRIH). Residues 361 to 383 (YKYSVCDKTFHHSSALLQHQTVH) form a C2H2-type 10; degenerate zinc finger. The residue at position 400 (serine 400) is a Phosphoserine.

It belongs to the krueppel C2H2-type zinc-finger protein family. Interacts with POU5F1.

The protein resides in the nucleus. The protein localises to the cytoplasm. In terms of biological role, transcriptional activator. Important for maintenance of pluripotency in embryonic stem cells. Binds directly to the POU5F1 distal enhancer and the NANOG proximal promoter, and enhances expression of both genes. Can also bind to numerous other gene promoters and regulates expression of many other pluripotency factors, either directly or indirectly. Promotes inhibition of MAPK signaling during embryonic stem cell differentiation. In Mus musculus (Mouse), this protein is Zinc finger protein 322 (Znf322).